We begin with the raw amino-acid sequence, 210 residues long: ATP-dependent Clp protease proteolytic subunit (210 aa).

Ser-106 functions as the Nucleophile in the catalytic mechanism. His-131 is an active-site residue.

This sequence belongs to the peptidase S14 family. As to quaternary structure, fourteen ClpP subunits assemble into 2 heptameric rings which stack back to back to give a disk-like structure with a central cavity, resembling the structure of eukaryotic proteasomes.

It localises to the cytoplasm. The catalysed reaction is Hydrolysis of proteins to small peptides in the presence of ATP and magnesium. alpha-casein is the usual test substrate. In the absence of ATP, only oligopeptides shorter than five residues are hydrolyzed (such as succinyl-Leu-Tyr-|-NHMec, and Leu-Tyr-Leu-|-Tyr-Trp, in which cleavage of the -Tyr-|-Leu- and -Tyr-|-Trp bonds also occurs).. Cleaves peptides in various proteins in a process that requires ATP hydrolysis. Has a chymotrypsin-like activity. Plays a major role in the degradation of misfolded proteins. The sequence is that of ATP-dependent Clp protease proteolytic subunit from Bradyrhizobium sp. (strain BTAi1 / ATCC BAA-1182).